A 232-amino-acid polypeptide reads, in one-letter code: tRNA (guanine-N(1)-)-methyltransferase (232 aa).

S-adenosyl-L-methionine contacts are provided by residues Gly108 and 128–133 (IGDFIM).

Belongs to the RNA methyltransferase TrmD family. As to quaternary structure, homodimer.

It is found in the cytoplasm. It carries out the reaction guanosine(37) in tRNA + S-adenosyl-L-methionine = N(1)-methylguanosine(37) in tRNA + S-adenosyl-L-homocysteine + H(+). Functionally, specifically methylates guanosine-37 in various tRNAs. The protein is tRNA (guanine-N(1)-)-methyltransferase of Campylobacter fetus subsp. fetus (strain 82-40).